Consider the following 177-residue polypeptide: MLSYGKPFNFQRWIDEHVHLLKPPVGNQQVWQDSDFIVTVVGGPNRRTDYHDDPLEEFFYQLRGNAYLNLWIDGKRERVELKEGDVFLLPPHVRHSPQRPESGSACLVIERQRPEGTVDGFEWYCDACGERVHRVELQLKSIVNDLPPLFDAFYESEEKRRCPRCGVVHPGKQGRTD.

Arg47 contributes to the O2 binding site. Fe cation is bound by residues His51, Glu57, and His95. Glu57 lines the substrate pocket. Residues Arg99 and Glu110 each contribute to the substrate site. Fe cation is bound by residues Cys125, Cys128, Cys162, and Cys165.

This sequence belongs to the 3-HAO family. Homodimer. Fe(2+) serves as cofactor.

The enzyme catalyses 3-hydroxyanthranilate + O2 = (2Z,4Z)-2-amino-3-carboxymuconate 6-semialdehyde. It participates in cofactor biosynthesis; NAD(+) biosynthesis; quinolinate from L-kynurenine: step 3/3. In terms of biological role, catalyzes the oxidative ring opening of 3-hydroxyanthranilate to 2-amino-3-carboxymuconate semialdehyde, which spontaneously cyclizes to quinolinate. This Burkholderia cenocepacia (strain ATCC BAA-245 / DSM 16553 / LMG 16656 / NCTC 13227 / J2315 / CF5610) (Burkholderia cepacia (strain J2315)) protein is 3-hydroxyanthranilate 3,4-dioxygenase.